A 265-amino-acid chain; its full sequence is MVLSLILQLSTLWPACRADFTPTAPLASYPQPWLGAHPAAVVTPGINVTLTCRAPQSAWRFALFKSGLVTPLLLRDVSVELAEFFLEEVTPAQGGSYHCRYRKTDWGPGVWSQPSNVLELLVTDQLPRPSLVALPGPVVAPGANVSLRCAGRIPGMSFALYRVGVATPLQYIDSVQPWADFLLIGTHTPGTYCCYYHTPSAPYVLSQRSQPLVISFEGSGSLDYTQGNLIRLGLAGMVLICLGIIVTCDWHSRSSAFDGLLPQQN.

The N-terminal stretch at 1-18 (MVLSLILQLSTLWPACRA) is a signal peptide. Topologically, residues 19 to 231 (DFTPTAPLAS…LDYTQGNLIR (213 aa)) are extracellular. Ig-like domains lie at 22 to 115 (PTAP…SQPS) and 125 to 218 (QLPR…SFEG). An N-linked (GlcNAc...) asparagine glycan is attached at Asn-47. A disulfide bond links Cys-52 and Cys-99. A glycan (N-linked (GlcNAc...) asparagine) is linked at Asn-144. The chain crosses the membrane as a helical span at residues 232 to 248 (LGLAGMVLICLGIIVTC). Residues 249–265 (DWHSRSSAFDGLLPQQN) lie on the Cytoplasmic side of the membrane.

It belongs to the leukocyte receptor complex/polymeric immunoglobulin receptor (PIR/LRC) family. As to expression, specifically expressed in preosteoclasts or mature osteoclasts.

It is found in the cell membrane. Its function is as follows. Regulator of osteoclastogenesis which plays an important bone-specific function in osteoclast differentiation. The protein is Osteoclast-associated immunoglobulin-like receptor (Oscar) of Mus musculus (Mouse).